The primary structure comprises 200 residues: Recombination protein RecR (200 aa).

The segment at 60–75 adopts a C4-type zinc-finger fold; it reads CVYCQALTEDDVCNIC. Residues 83–177 enclose the Toprim domain; that stretch reads TKLCIIESML…KISRIGFGVP (95 aa).

It belongs to the RecR family.

Its function is as follows. May play a role in DNA repair. It seems to be involved in an RecBC-independent recombinational process of DNA repair. It may act with RecF and RecO. This chain is Recombination protein RecR, found in Francisella tularensis subsp. holarctica (strain OSU18).